The following is a 281-amino-acid chain: Probable endonuclease 4 (281 aa).

Positions 69, 109, 145, 179, 182, 216, 229, 231, and 261 each coordinate Zn(2+).

Belongs to the AP endonuclease 2 family. Requires Zn(2+) as cofactor.

The catalysed reaction is Endonucleolytic cleavage to 5'-phosphooligonucleotide end-products.. Endonuclease IV plays a role in DNA repair. It cleaves phosphodiester bonds at apurinic or apyrimidinic (AP) sites, generating a 3'-hydroxyl group and a 5'-terminal sugar phosphate. This Aeromonas salmonicida (strain A449) protein is Probable endonuclease 4.